The following is an 82-amino-acid chain: Translational regulator CsrA (82 aa).

Belongs to the CsrA/RsmA family. As to quaternary structure, homodimer; the beta-strands of each monomer intercalate to form a hydrophobic core while the alpha-helices form wings that extend away from the core. Each of the alpha-helical wings interacts with an FliW monomer, yielding a FliW-CsrA(2)-FliW complex.

The protein localises to the cytoplasm. Functionally, a translational regulator that binds mRNA to regulate translation initiation and/or mRNA stability. Usually binds in the 5'-UTR at or near the Shine-Dalgarno sequence preventing ribosome-binding, thus repressing translation. Its main target seems to be the major flagellin gene, while its function is anatagonized by FliW. This Geobacillus thermodenitrificans (strain NG80-2) protein is Translational regulator CsrA.